A 385-amino-acid polypeptide reads, in one-letter code: Succinate--CoA ligase [ADP-forming] subunit beta (385 aa).

Residues 9 to 244 (KEILRKYGVP…QDEEDPLETR (236 aa)) enclose the ATP-grasp domain. Residues K46, 53-55 (GRG), E99, C102, and E107 contribute to the ATP site. Mg(2+) is bound by residues N199 and D213. Residues N264 and 321–323 (GIM) each bind substrate.

This sequence belongs to the succinate/malate CoA ligase beta subunit family. As to quaternary structure, heterotetramer of two alpha and two beta subunits. Requires Mg(2+) as cofactor.

It carries out the reaction succinate + ATP + CoA = succinyl-CoA + ADP + phosphate. The catalysed reaction is GTP + succinate + CoA = succinyl-CoA + GDP + phosphate. It functions in the pathway carbohydrate metabolism; tricarboxylic acid cycle; succinate from succinyl-CoA (ligase route): step 1/1. In terms of biological role, succinyl-CoA synthetase functions in the citric acid cycle (TCA), coupling the hydrolysis of succinyl-CoA to the synthesis of either ATP or GTP and thus represents the only step of substrate-level phosphorylation in the TCA. The beta subunit provides nucleotide specificity of the enzyme and binds the substrate succinate, while the binding sites for coenzyme A and phosphate are found in the alpha subunit. This is Succinate--CoA ligase [ADP-forming] subunit beta from Rickettsia bellii (strain OSU 85-389).